Reading from the N-terminus, the 972-residue chain is Aminopeptidase N (972 aa).

The Cytoplasmic segment spans residues 2–17 (TSQGRTRTLLNLTPIR). Residues 18-39 (LIVALFLVAAAVGLSIGLTYYF) form a helical; Signal-anchor for type II membrane protein membrane-spanning segment. Topologically, residues 40 to 972 (TRKAFDTSEK…LAAFFKKATL (933 aa)) are extracellular. Basic and acidic residues predominate over residues 47-62 (SEKPGKDDTGGKDKDN). The interval 47–66 (SEKPGKDDTGGKDKDNSPSA) is disordered. Asparagine 99 carries N-linked (GlcNAc...) asparagine glycosylation. Residue glutamate 208 coordinates substrate. A glycan (N-linked (GlcNAc...) asparagine) is linked at asparagine 227. 343–347 (GAMEN) serves as a coordination point for substrate. Histidine 379 contacts Zn(2+). Glutamate 380 functions as the Proton acceptor in the catalytic mechanism. Residues histidine 383 and glutamate 402 each contribute to the Zn(2+) site. The N-linked (GlcNAc...) asparagine glycan is linked to asparagine 549. 2 cysteine pairs are disulfide-bonded: cysteine 759–cysteine 766 and cysteine 804–cysteine 840. Residue asparagine 858 is glycosylated (N-linked (GlcNAc...) asparagine).

This sequence belongs to the peptidase M1 family. Zn(2+) serves as cofactor.

It localises to the membrane. The enzyme catalyses Release of an N-terminal amino acid, Xaa-|-Yaa- from a peptide, amide or arylamide. Xaa is preferably Ala, but may be most amino acids including Pro (slow action). When a terminal hydrophobic residue is followed by a prolyl residue, the two may be released as an intact Xaa-Pro dipeptide.. The chain is Aminopeptidase N from Haemonchus contortus (Barber pole worm).